The following is a 442-amino-acid chain: UPF0489 protein C5orf22 homolog (442 aa).

The segment at 175–208 (SSAKKPKLALEDSRNTASTNCDSSSEGLEKDTAT) is disordered. The segment covering 189 to 200 (NTASTNCDSSSE) has biased composition (polar residues).

It belongs to the UPF0489 family.

The protein is UPF0489 protein C5orf22 homolog of Pongo abelii (Sumatran orangutan).